The following is a 715-amino-acid chain: Polyribonucleotide nucleotidyltransferase (715 aa).

Aspartate 485 and aspartate 491 together coordinate Mg(2+). The region spanning 552 to 611 is the KH domain; sequence PRIHTMKIDPKKIKDVIGKGGAVIRALTEETGTSIDIDDDGTVKIAATDNNAAKAVMARI. The 69-residue stretch at 621–689 folds into the S1 motif domain; that stretch reads NAIYKGKVTR…RQNRIRLTMK (69 aa). Residues 695–715 are disordered; that stretch reads TPVAENVTEEAEVSSEQQAEI.

Belongs to the polyribonucleotide nucleotidyltransferase family. In terms of assembly, component of the RNA degradosome, which is a multiprotein complex involved in RNA processing and mRNA degradation. Requires Mg(2+) as cofactor.

The protein resides in the cytoplasm. It carries out the reaction RNA(n+1) + phosphate = RNA(n) + a ribonucleoside 5'-diphosphate. In terms of biological role, involved in mRNA degradation. Catalyzes the phosphorolysis of single-stranded polyribonucleotides processively in the 3'- to 5'-direction. The chain is Polyribonucleotide nucleotidyltransferase from Actinobacillus pleuropneumoniae serotype 7 (strain AP76).